The sequence spans 855 residues: Pre-mRNA-splicing factor SYF1 (855 aa).

9 HAT repeats span residues 15-47 (LVFE…FKQG), 48-80 (APKP…ARRA), 90-122 (PAYE…FLMD), 124-158 (GRVT…FLRS), 160-192 (PLPE…SSDR), 198-230 (QRLA…LISQ), 235-268 (VQSL…YYIR), 270-305 (GHFE…FEES), and 369-407 (GRPR…FYED). The residue at position 420 (Lys420) is an N6-acetyllysine. 5 HAT repeats span residues 498–530 (GTFQ…FLEE), 532–566 (KYFE…KFIS), 571–605 (RKLE…LEEE), 643–677 (YGVT…MECK), and 679–713 (GEID…FEVR). The interval 808–855 (AELAQQANPEEIQLGEDEDEDEMDLEPNEVRLEQQSVPAAVFGSLKED) is disordered. The segment covering 820–834 (QLGEDEDEDEMDLEP) has biased composition (acidic residues). Ser851 is subject to Phosphoserine.

The protein belongs to the crooked-neck family. As to quaternary structure, associates with RNA polymerase II, the TCR-specific proteins CKN1/CSA and ERCC6/CSB, and XPA. Identified in the spliceosome C complex. Component of the XAB2 complex, a multimeric protein complex composed of XAB2, PRPF19, AQR, ZNF830, ISY1, and PPIE. Identified in a pentameric intron-binding (IB) complex composed of AQR, XAB2, ISY1, ZNF830 and PPIE that is incorporated into the spliceosome as a preassembled complex. The IB complex does not contain PRPF19.

It localises to the nucleus. Involved in pre-mRNA splicing as component of the spliceosome. Involved in transcription-coupled repair (TCR), transcription and pre-mRNA splicing. The sequence is that of Pre-mRNA-splicing factor SYF1 (Xab2) from Mus musculus (Mouse).